The chain runs to 329 residues: MDEKKITMNVRNDELSEESKTLISSLPSDKNSTGVNVCKYQGCWYTPPILQGVLNFQKNFKPQDTDIIVASFPKCGTTWLKALTFALVRRSKHPSHDDHHPLLSDNPHVLSPSLEMYLYLCSENPDLTKFSSSSRLFSTHMPSHTLQEGLKGSTCKIVYMSRNVKDTLVSYWHFFCKKQTDDNIISSVEDTFEMFCRGVNFFGPFWDHVLSYWRGSLEDPNHVLFMKFEEMKEEPREQIKRLAEFLGCLFTKEEEESGLVDEIIDLCSLRNLSSLEINKTGKLHSTGRENKTFFRKGEVGDWKNYLTPEMENKIDMIIQEKLQNSGLKF.

74–79 (KCGTTW) contributes to the 3'-phosphoadenylyl sulfate binding site. The active-site Proton acceptor is the H140. 3'-phosphoadenylyl sulfate-binding positions include R162, S170, and 295 to 297 (RKG).

This sequence belongs to the sulfotransferase 1 family.

It localises to the cytoplasm. Sulfotransferase that utilizes 3'-phospho-5'-adenylyl sulfate (PAPS) as sulfonate donor. This chain is Cytosolic sulfotransferase 6 (SOT6), found in Arabidopsis thaliana (Mouse-ear cress).